The chain runs to 405 residues: L-rhamnonate dehydratase (405 aa).

Residues H33 and R59 each coordinate substrate. The Mg(2+) site is built by D226, E252, and E280. H329 acts as the Proton acceptor in catalysis. A substrate-binding site is contributed by E349.

This sequence belongs to the mandelate racemase/muconate lactonizing enzyme family. RhamD subfamily. As to quaternary structure, homooctamer; tetramer of dimers. Mg(2+) serves as cofactor.

It catalyses the reaction L-rhamnonate = 2-dehydro-3-deoxy-L-rhamnonate + H2O. Its function is as follows. Catalyzes the dehydration of L-rhamnonate to 2-keto-3-deoxy-L-rhamnonate (KDR). The polypeptide is L-rhamnonate dehydratase (Salmonella paratyphi C (strain RKS4594)).